The following is a 357-amino-acid chain: Holliday junction branch migration complex subunit RuvB (357 aa).

Residues 4–195 (TDKLAAKAVS…FGIVARLEFY (192 aa)) are large ATPase domain (RuvB-L). ATP-binding positions include Leu34, Arg35, Gly76, Lys79, Thr80, Thr81, 142-144 (EDY), Arg185, Tyr195, and Arg232. Position 80 (Thr80) interacts with Mg(2+). The small ATPAse domain (RuvB-S) stretch occupies residues 196-266 (TPAELAKIVT…VADAALAMLD (71 aa)). The tract at residues 269 to 357 (AVGFDLMDRK…PVRDLWDDNQ (89 aa)) is head domain (RuvB-H). DNA contacts are provided by Arg305, Arg324, and Arg329.

Belongs to the RuvB family. As to quaternary structure, homohexamer. Forms an RuvA(8)-RuvB(12)-Holliday junction (HJ) complex. HJ DNA is sandwiched between 2 RuvA tetramers; dsDNA enters through RuvA and exits via RuvB. An RuvB hexamer assembles on each DNA strand where it exits the tetramer. Each RuvB hexamer is contacted by two RuvA subunits (via domain III) on 2 adjacent RuvB subunits; this complex drives branch migration. In the full resolvosome a probable DNA-RuvA(4)-RuvB(12)-RuvC(2) complex forms which resolves the HJ.

Its subcellular location is the cytoplasm. The enzyme catalyses ATP + H2O = ADP + phosphate + H(+). Functionally, the RuvA-RuvB-RuvC complex processes Holliday junction (HJ) DNA during genetic recombination and DNA repair, while the RuvA-RuvB complex plays an important role in the rescue of blocked DNA replication forks via replication fork reversal (RFR). RuvA specifically binds to HJ cruciform DNA, conferring on it an open structure. The RuvB hexamer acts as an ATP-dependent pump, pulling dsDNA into and through the RuvAB complex. RuvB forms 2 homohexamers on either side of HJ DNA bound by 1 or 2 RuvA tetramers; 4 subunits per hexamer contact DNA at a time. Coordinated motions by a converter formed by DNA-disengaged RuvB subunits stimulates ATP hydrolysis and nucleotide exchange. Immobilization of the converter enables RuvB to convert the ATP-contained energy into a lever motion, pulling 2 nucleotides of DNA out of the RuvA tetramer per ATP hydrolyzed, thus driving DNA branch migration. The RuvB motors rotate together with the DNA substrate, which together with the progressing nucleotide cycle form the mechanistic basis for DNA recombination by continuous HJ branch migration. Branch migration allows RuvC to scan DNA until it finds its consensus sequence, where it cleaves and resolves cruciform DNA. The polypeptide is Holliday junction branch migration complex subunit RuvB (Ralstonia pickettii (strain 12J)).